Reading from the N-terminus, the 155-residue chain is D-aminoacyl-tRNA deacylase (155 aa).

A Gly-cisPro motif, important for rejection of L-amino acids motif is present at residues 137-138; the sequence is GP.

The protein belongs to the DTD family. Homodimer.

The protein localises to the cytoplasm. The catalysed reaction is glycyl-tRNA(Ala) + H2O = tRNA(Ala) + glycine + H(+). It catalyses the reaction a D-aminoacyl-tRNA + H2O = a tRNA + a D-alpha-amino acid + H(+). In terms of biological role, an aminoacyl-tRNA editing enzyme that deacylates mischarged D-aminoacyl-tRNAs. Also deacylates mischarged glycyl-tRNA(Ala), protecting cells against glycine mischarging by AlaRS. Acts via tRNA-based rather than protein-based catalysis; rejects L-amino acids rather than detecting D-amino acids in the active site. By recycling D-aminoacyl-tRNA to D-amino acids and free tRNA molecules, this enzyme counteracts the toxicity associated with the formation of D-aminoacyl-tRNA entities in vivo and helps enforce protein L-homochirality. This chain is D-aminoacyl-tRNA deacylase, found in Nitrosococcus oceani (strain ATCC 19707 / BCRC 17464 / JCM 30415 / NCIMB 11848 / C-107).